We begin with the raw amino-acid sequence, 334 residues long: MLVAMTTASYVTILVTLLFHILTINAKTVTKRAKETNLEDDEPQYWRGRFAKDVVPQFWKGRFSDPQFWKGRFSDPQFWKGRFSSHGNKRRYVPGRYGREFQGRFGREFQGRFGREQGRFGREEDQGRFGREEDQGRFGREEQGRFGREEDQGRFGREEDQGRFGREEDQGRFGREEEQGRFGREEDQGRFGREEEQGRFGREEDQGRFGREEDQGRFGREEEQGRFGKRDEDQGRFGKREDQGRFGKRDEDQGRFGKRDEDQGRFGKREDQGRFGKREDQGRFGRELLAKLNKRTTSIQEDPQTRFRDVQMTRRNVAKKDKIEESNDEEANKS.

A signal peptide spans 1 to 26 (MLVAMTTASYVTILVTLLFHILTINA). Positions 27-116 (KTVTKRAKET…REFQGRFGRE (90 aa)) are excised as a propeptide. Basic and acidic residues-rich tracts occupy residues 115-289 (REQG…RELL) and 303-334 (PQTRFRDVQMTRRNVAKKDKIEESNDEEANKS). Positions 115 to 334 (REQGRFGREE…ESNDEEANKS (220 aa)) are disordered. Phe120 is subject to Phenylalanine amide. Positions 122–125 (REED) are excised as a propeptide. Phe129 carries the post-translational modification Phenylalanine amide. Residues 131 to 134 (REED) constitute a propeptide that is removed on maturation. Phe138 is modified (phenylalanine amide). A propeptide spanning residues 140–142 (REE) is cleaved from the precursor. Phe146 is modified (phenylalanine amide). A propeptide spanning residues 148-151 (REED) is cleaved from the precursor. Phenylalanine amide is present on Phe155. Positions 157-160 (REED) are excised as a propeptide. Position 164 is a phenylalanine amide (Phe164). Positions 166-169 (REED) are excised as a propeptide. The residue at position 173 (Phe173) is a Phenylalanine amide. A propeptide spanning residues 175–178 (REEE) is cleaved from the precursor. Phe182 is modified (phenylalanine amide). A propeptide spanning residues 184–187 (REED) is cleaved from the precursor. At Phe191 the chain carries Phenylalanine amide. Residues 193-196 (REEE) constitute a propeptide that is removed on maturation. Phe200 carries the post-translational modification Phenylalanine amide. A propeptide spanning residues 202–205 (REED) is cleaved from the precursor. Phe209 is subject to Phenylalanine amide. A propeptide spanning residues 211–214 (REED) is cleaved from the precursor. Phe218 is modified (phenylalanine amide). A propeptide spanning residues 220 to 223 (REEE) is cleaved from the precursor. The residue at position 227 (Phe227) is a Phenylalanine amide. Residues 229-233 (KRDED) constitute a propeptide that is removed on maturation. Position 237 is a phenylalanine amide (Phe237). Residues 239 to 242 (KRED) constitute a propeptide that is removed on maturation. Phenylalanine amide is present on Phe246. Residues 248–252 (KRDED) constitute a propeptide that is removed on maturation. Residue Phe256 is modified to Phenylalanine amide. Residues 258–262 (KRDED) constitute a propeptide that is removed on maturation. Phenylalanine amide is present on Phe266. A propeptide spanning residues 268 to 271 (KRED) is cleaved from the precursor. Phe275 carries the phenylalanine amide modification. The propeptide occupies 277-280 (KRED). The residue at position 284 (Phe284) is a Phenylalanine amide. A propeptide spanning residues 286–334 (RELLAKLNKRTTSIQEDPQTRFRDVQMTRRNVAKKDKIEESNDEEANKS) is cleaved from the precursor.

Belongs to the FARP (FMRFamide related peptide) family. As to expression, neurons associated with smooth muscle fibers.

Its subcellular location is the secreted. Its function is as follows. Not known but it could act as a transmitter at neuromuscular synapses. In Calliactis parasitica (Sea anemone), this protein is Antho-RFamide neuropeptides.